We begin with the raw amino-acid sequence, 231 residues long: PX domain-containing protein 1 (231 aa).

One can recognise a PX domain in the interval 1–134; it reads MASAVFEGTS…TFFERSPLDQ (134 aa).

The sequence is that of PX domain-containing protein 1 (PXDC1) from Homo sapiens (Human).